We begin with the raw amino-acid sequence, 356 residues long: MSAVGRLAAVSLAQVRGALCGALLGDCMGAEFEGSDAVELPDVLEFVRLLEKEKKAGTLFYTDDTAMTRAVIQSLIAKPDFDEVDMAKRFAEEYKKEPTRGYGAGVVQVFKKLLSPKYSDVFQPAREQFDGKGSYGNGGAMRVASIALAYPNIQDVIKFARRSAQLTHASPLGYNGAILQALAVHFALQGELKRDTFLEQLIGEMERIEGGEMSASDAGEHDRPNEVKLPFCSRLKKIKEFLASSNVPKADIVDELGHGIAALESVPTAIYSFLHCMESDPDIPDLYNNLQRTIIYSISLGGDTDTIATMAGAIAGAYYGMDQVTPSWKRSCEAIVETEESAVKLYELYCKQLKTP.

D26, E33, T62, D63, and D64 together coordinate Mg(2+). D63 serves as a coordination point for substrate. Residues 132-138, H168, and I260 contribute to the substrate site; that span reads KGSYGNG. Residues D303, D305, and T306 each contribute to the Mg(2+) site.

The protein belongs to the ADP-ribosylglycohydrolase family. In terms of assembly, monomer. It depends on Mg(2+) as a cofactor. Requires Mn(2+) as cofactor.

It localises to the nucleus. Its subcellular location is the cytoplasm. The protein resides in the chromosome. The protein localises to the mitochondrion matrix. The enzyme catalyses [(1''-&gt;2')-ADP-alpha-D-ribose](n) + H2O = [(1''-&gt;2')-ADP-alpha-D-ribose](n-1) + ADP-D-ribose. The catalysed reaction is 1''-O-acetyl-ADP-alpha-D-ribose + H2O = ADP-D-ribose + acetate + H(+). It catalyses the reaction O-(ADP-D-ribosyl)-L-seryl-[protein] + H2O = ADP-D-ribose + L-seryl-[protein]. It carries out the reaction alpha-NAD(+) + H2O = ADP-D-ribose + nicotinamide + H(+). With respect to regulation, the protein undergoes a dramatic conformational switch from closed to open states upon substrate-binding, which enables specific substrate recognition for the 1''-O-linkage. The glutamate flap (Glu-33) blocks substrate entrance to Mg(2+) in the unliganded closed state. In presence of substrate, Glu-33 is ejected from the active site: this closed-to-open transition significantly widens the substrate-binding channel and precisely positions the scissile 1''-O-linkage for cleavage while securing tightly 2'- and 3'-hydroxyls of ADP-ribose. Activity is inhibited by calcium. Functionally, ADP-ribosylhydrolase that preferentially hydrolyzes the scissile alpha-O-linkage attached to the anomeric C1'' position of ADP-ribose and acts on different substrates, such as proteins ADP-ribosylated on serine and threonine, free poly(ADP-ribose) and O-acetyl-ADP-D-ribose. Specifically acts as a serine mono-ADP-ribosylhydrolase by mediating the removal of mono-ADP-ribose attached to serine residues on proteins, thereby playing a key role in DNA damage response. Serine ADP-ribosylation of proteins constitutes the primary form of ADP-ribosylation of proteins in response to DNA damage. Does not hydrolyze ADP-ribosyl-arginine, -cysteine, -diphthamide, or -asparagine bonds. Also able to degrade protein free poly(ADP-ribose), which is synthesized in response to DNA damage: free poly(ADP-ribose) acts as a potent cell death signal and its degradation by ADPRHL2 protects cells from poly(ADP-ribose)-dependent cell death, a process named parthanatos. Also hydrolyzes free poly(ADP-ribose) in mitochondria. Specifically digests O-acetyl-ADP-D-ribose, a product of deacetylation reactions catalyzed by sirtuins. Specifically degrades 1''-O-acetyl-ADP-D-ribose isomer, rather than 2''-O-acetyl-ADP-D-ribose or 3''-O-acetyl-ADP-D-ribose isomers. This is ADP-ribosylhydrolase ARH3 (adprs) from Latimeria chalumnae (Coelacanth).